A 515-amino-acid chain; its full sequence is GMP synthase [glutamine-hydrolyzing] (515 aa).

The 193-residue stretch at 6–198 folds into the Glutamine amidotransferase type-1 domain; that stretch reads KVIILDFGSQ…VFKVAGLKAD (193 aa). The active-site Nucleophile is the Cys-83. Catalysis depends on residues His-172 and Glu-174. The GMPS ATP-PPase domain occupies 199 to 390; sequence WTMSSFVENC…LGLPEFIIWR (192 aa). ATP is bound at residue 226–232; that stretch reads SGGIDST.

In terms of assembly, homodimer.

The catalysed reaction is XMP + L-glutamine + ATP + H2O = GMP + L-glutamate + AMP + diphosphate + 2 H(+). It participates in purine metabolism; GMP biosynthesis; GMP from XMP (L-Gln route): step 1/1. Functionally, catalyzes the synthesis of GMP from XMP. The polypeptide is GMP synthase [glutamine-hydrolyzing] (Maridesulfovibrio salexigens (strain ATCC 14822 / DSM 2638 / NCIMB 8403 / VKM B-1763) (Desulfovibrio salexigens)).